A 148-amino-acid polypeptide reads, in one-letter code: uncharacterized protein (148 aa).

This is an uncharacterized protein from Acheta domesticus (House cricket).